Here is a 102-residue protein sequence, read N- to C-terminus: Acid shock protein (102 aa).

The signal sequence occupies residues 1–21 (MKKVLALVVAAAMGLSSAAFA). Residues 21–41 (AAETTTTPAPTATTTKAAPAK) show a composition bias toward low complexity. The tract at residues 21–102 (AAETTTTPAP…PAKPAAQPAA (82 aa)) is disordered. Positions 22 to 58 (AETTTTPAPTATTTKAAPAKTTHHKKQHKAAPAQKAQ) are excised as a propeptide. The span at 80 to 90 (AAKKHAKKHSH) shows a compositional bias: basic residues. Residues 91–102 (QQPAKPAAQPAA) are compositionally biased toward low complexity.

This sequence belongs to the Asr family. Post-translationally, proteolytic processing gives rise to the active protein.

The protein localises to the periplasm. Its function is as follows. Required for growth and/or survival at acidic conditions. In Escherichia coli (strain K12 / MC4100 / BW2952), this protein is Acid shock protein.